A 160-amino-acid chain; its full sequence is Cytochrome b6-f complex subunit 4 (160 aa).

The next 3 helical transmembrane spans lie at 36-56 (LLYI…GLAV), 95-115 (LLGV…PFLE), and 131-151 (TVFL…ALPI).

The protein belongs to the cytochrome b family. PetD subfamily. The 4 large subunits of the cytochrome b6-f complex are cytochrome b6, subunit IV (17 kDa polypeptide, petD), cytochrome f and the Rieske protein, while the 4 small subunits are petG, petL, petM and petN. The complex functions as a dimer.

The protein resides in the plastid. Its subcellular location is the chloroplast thylakoid membrane. In terms of biological role, component of the cytochrome b6-f complex, which mediates electron transfer between photosystem II (PSII) and photosystem I (PSI), cyclic electron flow around PSI, and state transitions. The chain is Cytochrome b6-f complex subunit 4 from Physcomitrium patens (Spreading-leaved earth moss).